A 422-amino-acid polypeptide reads, in one-letter code: UDP-N-acetylglucosamine 1-carboxyvinyltransferase (422 aa).

23-24 contributes to the phosphoenolpyruvate binding site; it reads KN. Arg-92 contacts UDP-N-acetyl-alpha-D-glucosamine. Cys-116 (proton donor) is an active-site residue. A 2-(S-cysteinyl)pyruvic acid O-phosphothioketal modification is found at Cys-116. UDP-N-acetyl-alpha-D-glucosamine-binding positions include 121–125, 161–165, Asp-306, and Ile-328; these read RPVDL and KVSVG.

Belongs to the EPSP synthase family. MurA subfamily.

Its subcellular location is the cytoplasm. It catalyses the reaction phosphoenolpyruvate + UDP-N-acetyl-alpha-D-glucosamine = UDP-N-acetyl-3-O-(1-carboxyvinyl)-alpha-D-glucosamine + phosphate. Its pathway is cell wall biogenesis; peptidoglycan biosynthesis. Its function is as follows. Cell wall formation. Adds enolpyruvyl to UDP-N-acetylglucosamine. The polypeptide is UDP-N-acetylglucosamine 1-carboxyvinyltransferase (Aliivibrio fischeri (strain MJ11) (Vibrio fischeri)).